The primary structure comprises 271 residues: Phosphatidylinositol transfer protein alpha isoform (271 aa).

Positions 59, 61, 86, 90, 97, and 195 each coordinate a 1,2-diacyl-sn-glycero-3-phospho-(1D-myo-inositol). Residue Lys-216 is modified to N6-acetyllysine. A compositionally biased stretch (basic and acidic residues) spans 251-264 (TKRQLDEMRQKDPV). Positions 251-271 (TKRQLDEMRQKDPVKGMTADD) are disordered.

It belongs to the PtdIns transfer protein family. PI transfer class I subfamily. Phosphorylated by PKC in a calcium and phosphatidylserine-dependent manner.

Its subcellular location is the cytoplasm. It localises to the nucleus. The catalysed reaction is a 1,2-diacyl-sn-glycero-3-phosphocholine(in) = a 1,2-diacyl-sn-glycero-3-phosphocholine(out). It carries out the reaction a 1,2-diacyl-sn-glycero-3-phospho-(1D-myo-inositol)(in) = a 1,2-diacyl-sn-glycero-3-phospho-(1D-myo-inositol)(out). Catalyzes the transfer of phosphatidylinositol (PI) and phosphatidylcholine (PC) between membranes. Shows a preference for PI and PC containing shorter saturated or monosaturated acyl chains at the sn-1 and sn-2 positions. Preference order for PC is C16:1 &gt; C16:0 &gt; C18:1 &gt; C18:0 &gt; C20:4 and for PI is C16:1 &gt; C16:0 &gt; C18:1 &gt; C18:0 &gt; C20:4 &gt; C20:3. This is Phosphatidylinositol transfer protein alpha isoform (Pitpna) from Mus musculus (Mouse).